The following is a 301-amino-acid chain: Small ribosomal subunit protein uS2 (301 aa).

It belongs to the universal ribosomal protein uS2 family. Component of the small ribosomal subunit. Mature ribosomes consist of a small (40S) and a large (60S) subunit. The 40S subunit contains about 33 different proteins and 1 molecule of RNA (18S). The 60S subunit contains about 49 different proteins and 3 molecules of RNA (28S, 5.8S and 5S). Interacts with ribosomal protein S21.

The protein resides in the cytoplasm. Its function is as follows. Required for the assembly and/or stability of the 40S ribosomal subunit. Required for the processing of the 20S rRNA-precursor to mature 18S rRNA in a late step of the maturation of 40S ribosomal subunits. This Brugia malayi (Filarial nematode worm) protein is Small ribosomal subunit protein uS2.